Consider the following 334-residue polypeptide: AT-hook motif nuclear-localized protein 2 (334 aa).

Positions Met1–Val21 are enriched in low complexity. 2 disordered regions span residues Met1–Ser103 and Ser109–Phe128. Pro residues predominate over residues Ser44–Gln54. The span at Ile71–Lys80 shows a compositional bias: basic residues. The short motif at Lys72–Lys80 is the Bipartite nuclear localization signal element. A DNA-binding region (a.T hook) is located at residues Lys72 to Asp84. A compositionally biased stretch (polar residues) spans Leu90–Ser103. One can recognise a PPC domain in the interval Ala147–Pro287. The segment covering Ser306–Ser319 has biased composition (polar residues). Positions Ser306–Thr334 are disordered.

Its subcellular location is the nucleus. In terms of biological role, transcription factor that specifically binds AT-rich DNA sequences related to the nuclear matrix attachment regions (MARs). This is AT-hook motif nuclear-localized protein 2 from Arabidopsis thaliana (Mouse-ear cress).